The chain runs to 325 residues: MKVHLDRTSSGFCIGVQGTIHLAEEKLEELDSKLYCLGDIVHNEVEVKRLEDLGLITIDNEEYNKLKHAHVLVRAHGEPPSTYKRADSNELSITDSTCPVVSKLQRTARLLFELGFQIIIYGKKTHPEVIGINGQCADQAVIIKHADLSVPEETDPIDFTRQTALISQTTMDVPGFYILKKNLESLFADRTDAAEQKSTHSWKTIRDIDITAEMTGICPLPDLVYKDTICRQVSSRNAKLHDFAAANDIIIFVAGKKSSNGQVLFNICRESNPRSYFIADQTGLQDEWFYDNGRPVGSVGVCGATSTPMWLLENVAHSIEQTYAG.

Cys13 provides a ligand contact to [4Fe-4S] cluster. 2 residues coordinate (2E)-4-hydroxy-3-methylbut-2-enyl diphosphate: His42 and His76. Dimethylallyl diphosphate contacts are provided by His42 and His76. The isopentenyl diphosphate site is built by His42 and His76. Residue Cys98 coordinates [4Fe-4S] cluster. His126 serves as a coordination point for (2E)-4-hydroxy-3-methylbut-2-enyl diphosphate. Dimethylallyl diphosphate is bound at residue His126. His126 provides a ligand contact to isopentenyl diphosphate. Glu128 acts as the Proton donor in catalysis. (2E)-4-hydroxy-3-methylbut-2-enyl diphosphate is bound at residue Thr169. Cys230 serves as a coordination point for [4Fe-4S] cluster. (2E)-4-hydroxy-3-methylbut-2-enyl diphosphate-binding residues include Ser258, Ser259, Asn260, and Ser306. Residues Ser258, Ser259, Asn260, and Ser306 each coordinate dimethylallyl diphosphate. Residues Ser258, Ser259, Asn260, and Ser306 each coordinate isopentenyl diphosphate.

It belongs to the IspH family. [4Fe-4S] cluster is required as a cofactor.

It catalyses the reaction isopentenyl diphosphate + 2 oxidized [2Fe-2S]-[ferredoxin] + H2O = (2E)-4-hydroxy-3-methylbut-2-enyl diphosphate + 2 reduced [2Fe-2S]-[ferredoxin] + 2 H(+). The catalysed reaction is dimethylallyl diphosphate + 2 oxidized [2Fe-2S]-[ferredoxin] + H2O = (2E)-4-hydroxy-3-methylbut-2-enyl diphosphate + 2 reduced [2Fe-2S]-[ferredoxin] + 2 H(+). Its pathway is isoprenoid biosynthesis; dimethylallyl diphosphate biosynthesis; dimethylallyl diphosphate from (2E)-4-hydroxy-3-methylbutenyl diphosphate: step 1/1. It functions in the pathway isoprenoid biosynthesis; isopentenyl diphosphate biosynthesis via DXP pathway; isopentenyl diphosphate from 1-deoxy-D-xylulose 5-phosphate: step 6/6. Functionally, catalyzes the conversion of 1-hydroxy-2-methyl-2-(E)-butenyl 4-diphosphate (HMBPP) into a mixture of isopentenyl diphosphate (IPP) and dimethylallyl diphosphate (DMAPP). Acts in the terminal step of the DOXP/MEP pathway for isoprenoid precursor biosynthesis. In Chlorobium phaeobacteroides (strain BS1), this protein is 4-hydroxy-3-methylbut-2-enyl diphosphate reductase.